The sequence spans 102 residues: MSSSGYPPNQGAFSTEQSHYPPHSVKYTFPSTHHQQDPAFGGKHEAPSSPILGQPCGDDQNASPSKLSKEELIECMDRVDREIAKVEQQILKLKKKQVKVFV.

Over residues 1-18 (MSSSGYPPNQGAFSTEQS) the composition is skewed to polar residues. The interval 1 to 68 (MSSSGYPPNQ…DQNASPSKLS (68 aa)) is disordered. The stretch at 68-100 (SKEELIECMDRVDREIAKVEQQILKLKKKQVKV) forms a coiled coil.

This sequence belongs to the N-CoR nuclear receptor corepressors family.

The sequence is that of Putative nuclear receptor corepressor 1-like protein NCOR1P1 (NCOR1P1) from Homo sapiens (Human).